Consider the following 243-residue polypeptide: Adenosylcobinamide-GDP ribazoletransferase (243 aa).

Transmembrane regions (helical) follow at residues 31-51 (LLFY…LNIA), 57-77 (LLLH…ALHL), 109-129 (IAVV…LALI), 135-155 (MALI…FLTT), and 188-208 (LVIA…VFIW).

It belongs to the CobS family. Requires Mg(2+) as cofactor.

It is found in the cell inner membrane. The enzyme catalyses alpha-ribazole + adenosylcob(III)inamide-GDP = adenosylcob(III)alamin + GMP + H(+). It carries out the reaction alpha-ribazole 5'-phosphate + adenosylcob(III)inamide-GDP = adenosylcob(III)alamin 5'-phosphate + GMP + H(+). Its pathway is cofactor biosynthesis; adenosylcobalamin biosynthesis; adenosylcobalamin from cob(II)yrinate a,c-diamide: step 7/7. Its function is as follows. Joins adenosylcobinamide-GDP and alpha-ribazole to generate adenosylcobalamin (Ado-cobalamin). Also synthesizes adenosylcobalamin 5'-phosphate from adenosylcobinamide-GDP and alpha-ribazole 5'-phosphate. This chain is Adenosylcobinamide-GDP ribazoletransferase, found in Pseudomonas fluorescens (strain Pf0-1).